The chain runs to 113 residues: Nucleoid-associated protein EUBREC_0329 (113 aa).

Residues 1 to 12 (MARRGGFPGGMP) are compositionally biased toward gly residues. The interval 1 to 45 (MARRGGFPGGMPGNMNNLMKQAQKMQRQMEEAQKQLEDAEVTAKA) is disordered. The segment covering 27–37 (RQMEEAQKQLE) has biased composition (basic and acidic residues).

This sequence belongs to the YbaB/EbfC family. Homodimer.

The protein resides in the cytoplasm. It localises to the nucleoid. Its function is as follows. Binds to DNA and alters its conformation. May be involved in regulation of gene expression, nucleoid organization and DNA protection. The sequence is that of Nucleoid-associated protein EUBREC_0329 from Agathobacter rectalis (strain ATCC 33656 / DSM 3377 / JCM 17463 / KCTC 5835 / VPI 0990) (Eubacterium rectale).